The primary structure comprises 312 residues: Lipid-translocating exporter-like protein RTA1 (312 aa).

Positions 1–21 (MSPESKKITAHGSTSMPLSRT) are disordered. Positions 11–21 (HGSTSMPLSRT) are enriched in polar residues. 6 consecutive transmembrane segments (helical) span residues 29 to 49 (IPLT…FFLA), 61 to 81 (LSTM…YFIC), 103 to 123 (FITF…LLAG), 142 to 162 (AMIT…SFHV), 183 to 203 (FMMV…RSAY), and 223 to 243 (SLML…ILPI). Asn-258 and Asn-304 each carry an N-linked (GlcNAc...) asparagine glycan.

It belongs to the lipid-translocating exporter (LTE) (TC 9.A.26.1) family.

It is found in the membrane. Its pathway is siderophore biosynthesis. Its function is as follows. Lipid-translocating exporter-like protein; part of the gene cluster that mediates the biosynthesis of hydroxamate-containing siderophores that play a critical role in virulence via intracellular iron acquisition during macrophage infection. The sequence is that of Lipid-translocating exporter-like protein RTA1 from Ajellomyces capsulatus (Darling's disease fungus).